The primary structure comprises 296 residues: Protoheme IX farnesyltransferase 2 (296 aa).

Transmembrane regions (helical) follow at residues 7-27 (LLVAKPGIIFGNLIAVAGGYF), 36-56 (PMLLLATVIGLSLVVASGCVL), 83-103 (LKAALAHGLVLGVAGFGLLWW), 108-128 (LTTALAGFGYFVYVGLYSLWF), 134-154 (YGTLVGSLSGAMPPVVGYCAV), 163-183 (ASLLAIFCLWQMPHSYAIAIF), 207-227 (IHIVLYILAFMAATLALCLGG), 229-249 (AGYGYLLVAVAVSLWWLAIAL), and 265-285 (FAFSIVAITALSVMMSIDFQV).

Belongs to the UbiA prenyltransferase family. Protoheme IX farnesyltransferase subfamily.

The protein resides in the cell inner membrane. The enzyme catalyses heme b + (2E,6E)-farnesyl diphosphate + H2O = Fe(II)-heme o + diphosphate. It participates in porphyrin-containing compound metabolism; heme O biosynthesis; heme O from protoheme: step 1/1. Its function is as follows. Converts heme B (protoheme IX) to heme O by substitution of the vinyl group on carbon 2 of heme B porphyrin ring with a hydroxyethyl farnesyl side group. This is Protoheme IX farnesyltransferase 2 from Pseudomonas aeruginosa (strain UCBPP-PA14).